Reading from the N-terminus, the 191-residue chain is Protein YceI (191 aa).

The signal sequence occupies residues 1–22; that stretch reads MKKSLLGLTFASLMFSAGSAVA.

It belongs to the UPF0312 family. Type 1 subfamily.

Its subcellular location is the periplasm. In Shigella flexneri, this protein is Protein YceI.